The following is a 646-amino-acid chain: Threonine--tRNA ligase (646 aa).

One can recognise a TGS domain in the interval 1 to 63; it reads MAQISLTFPD…ETDAKIAIHT (63 aa). Residues 247–544 form a catalytic region; that stretch reads DHRKLGREME…LIENYAGKLP (298 aa). The Zn(2+) site is built by Cys-344, His-395, and His-521.

This sequence belongs to the class-II aminoacyl-tRNA synthetase family. In terms of assembly, homodimer. It depends on Zn(2+) as a cofactor.

Its subcellular location is the cytoplasm. The catalysed reaction is tRNA(Thr) + L-threonine + ATP = L-threonyl-tRNA(Thr) + AMP + diphosphate + H(+). Functionally, catalyzes the attachment of threonine to tRNA(Thr) in a two-step reaction: L-threonine is first activated by ATP to form Thr-AMP and then transferred to the acceptor end of tRNA(Thr). Also edits incorrectly charged L-seryl-tRNA(Thr). The sequence is that of Threonine--tRNA ligase from Cereibacter sphaeroides (strain ATCC 17029 / ATH 2.4.9) (Rhodobacter sphaeroides).